Consider the following 602-residue polypeptide: Elongation factor 4 (602 aa).

The region spanning 7-189 is the tr-type G domain; that stretch reads KFIRNFSIIA…QLVVAIPPPV (183 aa). GTP contacts are provided by residues 19 to 24 and 136 to 139; these read DHGKST and NKID.

The protein belongs to the TRAFAC class translation factor GTPase superfamily. Classic translation factor GTPase family. LepA subfamily.

Its subcellular location is the cell inner membrane. The catalysed reaction is GTP + H2O = GDP + phosphate + H(+). In terms of biological role, required for accurate and efficient protein synthesis under certain stress conditions. May act as a fidelity factor of the translation reaction, by catalyzing a one-codon backward translocation of tRNAs on improperly translocated ribosomes. Back-translocation proceeds from a post-translocation (POST) complex to a pre-translocation (PRE) complex, thus giving elongation factor G a second chance to translocate the tRNAs correctly. Binds to ribosomes in a GTP-dependent manner. In Coxiella burnetii (strain RSA 493 / Nine Mile phase I), this protein is Elongation factor 4.